Here is a 435-residue protein sequence, read N- to C-terminus: Adenylosuccinate synthetase (435 aa).

GTP contacts are provided by residues 12–18 (GDEGKGK) and 40–42 (GHT). Residue Asp13 is the Proton acceptor of the active site. The Mg(2+) site is built by Asp13 and Gly40. Residues 13–16 (DEGK), 38–41 (NAGH), Thr130, Arg144, Gln224, Thr239, and Arg301 each bind IMP. The active-site Proton donor is His41. 297–303 (TVSNRKR) is a substrate binding site. Residues Arg303, 329-331 (KLD), and 411-413 (SAG) each bind GTP.

It belongs to the adenylosuccinate synthetase family. As to quaternary structure, homodimer. Mg(2+) serves as cofactor.

Its subcellular location is the cytoplasm. It catalyses the reaction IMP + L-aspartate + GTP = N(6)-(1,2-dicarboxyethyl)-AMP + GDP + phosphate + 2 H(+). Its pathway is purine metabolism; AMP biosynthesis via de novo pathway; AMP from IMP: step 1/2. Its function is as follows. Plays an important role in the de novo pathway of purine nucleotide biosynthesis. Catalyzes the first committed step in the biosynthesis of AMP from IMP. The protein is Adenylosuccinate synthetase of Wolbachia sp. subsp. Brugia malayi (strain TRS).